Consider the following 164-residue polypeptide: UPF0304 protein KPK_1463 (164 aa).

Belongs to the UPF0304 family.

The chain is UPF0304 protein KPK_1463 from Klebsiella pneumoniae (strain 342).